We begin with the raw amino-acid sequence, 267 residues long: Putative N-acetylmuramoyl-L-alanine amidase RC0497 (267 aa).

A disordered region spans residues 1–25 (MSKSKAIENNGISNTNSPNGKYMAP). A compositionally biased stretch (polar residues) spans 10–19 (NGISNTNSPN). In terms of domain architecture, N-acetylmuramoyl-L-alanine amidase spans 33-141 (TCVVITYSVS…NLDLKHDLVG (109 aa)).

This sequence belongs to the N-acetylmuramoyl-L-alanine amidase 2 family.

The protein localises to the secreted. It carries out the reaction Hydrolyzes the link between N-acetylmuramoyl residues and L-amino acid residues in certain cell-wall glycopeptides.. The sequence is that of Putative N-acetylmuramoyl-L-alanine amidase RC0497 from Rickettsia conorii (strain ATCC VR-613 / Malish 7).